The sequence spans 717 residues: MQNSEGGADSPASVALRPAAQPMPASPQRVLVQAAGSTPKGTPMQTLTLPRVQPVPPQVQHVYPAQVQYVEGGDAVYANGAIRAAYAYNPDPQLYAPSSAASYFETPGGTQVTVAASSPPAVPSHGMVGITMDVSGTPIVSGAGAYLIHGGMDGTRHSLAHTARSSPATLEMAIETLQKSEGLAPHKGGLLNSHLQWLLDNYETAEGVSLPRSSLYNHYLRHCQEHKLEPVNAASFGKLIRSVFMGLRTRRLGTRGNSKYHYYGIRLKPDSPLNRLQEDTQYMAMRQQPTHQKPRYRPAQKSDSLGDGSAHSNMHGMPDQAMATQGQHHQQYIDVSHVFPEFPAPDLGSTLLQESVTLHDVKALQLVYRRHCEATLDVVMNLQFQYIEKLWLSFWNCKATSSDSCASLPASDEDPEVTLLPKEKLISLCKCEPILQWMRSCDHILYQTLVETLIPDVLRPVPSSLTQAIRNFAKSLEGWLINAMSGFPQQVIQTKVGVVSAFAQTLRRYTSLNHLAQAARAVLQNTSQINQMLSDLNRVDFANVQEQASWVCQCEESLVQRLEHDFKVTLQQQSSLDQWASWLDNVVTQVLKQHSGSPSFPKAARQFLLKWSFYSSMVIRDLTLRSAASFGSFHLIRLLYDEYMFYLVEHRVAQATGETPIAVMGEFNDLASLSLTLLDKEDIGDGHSSEADVDGRSLGEPLVKRERSDPSHPLQGI.

The tract at residues 1 to 28 (MQNSEGGADSPASVALRPAAQPMPASPQ) is disordered. Ser-26 is subject to Phosphoserine. The RFX-type winged-helix DNA-binding region spans 194–269 (HLQWLLDNYE…YHYYGIRLKP (76 aa)). The interval 286-318 (RQQPTHQKPRYRPAQKSDSLGDGSAHSNMHGMP) is disordered. A Phosphoserine modification is found at Ser-411. Over residues 685–710 (DGHSSEADVDGRSLGEPLVKRERSDP) the composition is skewed to basic and acidic residues. A disordered region spans residues 685–717 (DGHSSEADVDGRSLGEPLVKRERSDPSHPLQGI).

This sequence belongs to the RFX family. Homodimer; probably only forms homodimers in testis. Heterodimer; heterodimerizes with RFX1 and RFX3.

It localises to the nucleus. The protein localises to the cytoplasm. Its function is as follows. Transcription factor that acts as a key regulator of spermatogenesis. Acts by regulating expression of genes required for the haploid phase during spermiogenesis, such as genes required for cilium assembly and function. Recognizes and binds the X-box, a regulatory motif with DNA sequence 5'-GTNRCC(0-3N)RGYAAC-3' present on promoters. Probably activates transcription of the testis-specific histone gene H1-6. This Mus musculus (Mouse) protein is DNA-binding protein RFX2 (Rfx2).